Reading from the N-terminus, the 186-residue chain is ATP-dependent protease subunit HslV (186 aa).

Threonine 14 is an active-site residue. Na(+)-binding residues include alanine 168, cysteine 171, and threonine 174.

This sequence belongs to the peptidase T1B family. HslV subfamily. A double ring-shaped homohexamer of HslV is capped on each side by a ring-shaped HslU homohexamer. The assembly of the HslU/HslV complex is dependent on binding of ATP.

Its subcellular location is the cytoplasm. The enzyme catalyses ATP-dependent cleavage of peptide bonds with broad specificity.. With respect to regulation, allosterically activated by HslU binding. Functionally, protease subunit of a proteasome-like degradation complex believed to be a general protein degrading machinery. The sequence is that of ATP-dependent protease subunit HslV from Bradyrhizobium sp. (strain ORS 278).